The sequence spans 532 residues: Intercellular adhesion molecule 1 (532 aa).

A signal peptide spans 1-27 (MAPSGPQPALPILVVLLGALLLGPGNA). Over 28 to 480 (QTSVFPPEVI…TVNVLSPRYE (453 aa)) the chain is Extracellular. Ig-like C2-type domains lie at 41-103 (GGSV…QSSA) and 128-193 (GKNL…LDLR). Residue Asn47 is glycosylated (N-linked (GlcNAc...) asparagine). 2 cysteine pairs are disulfide-bonded: Cys48–Cys92 and Cys52–Cys96. Asn130 and Asn145 each carry an N-linked (GlcNAc...) asparagine glycan. Residues Cys135 and Cys186 are joined by a disulfide bond. The short motif at 152-154 (RGE) is the Cell attachment site; atypical element. N-linked (GlcNAc...) asparagine glycosylation is found at Asn183, Asn202, Asn267, Asn296, and Asn316. An Ig-like C2-type 3 domain is found at 230-297 (DTQGTVVCSL…LLCGVMLGNQ (68 aa)). The cysteines at positions 237 and 290 are disulfide-linked. Residues 325-378 (GTEVIVECEAHPRAKVMLNGVPAQPPGPRAQFLLKATPEDNGRSFSCSATLEVA) form the Ig-like C2-type 4 domain. A disulfide bridge connects residues Cys332 and Cys371. Residues Asn385 and Asn406 are each glycosylated (N-linked (GlcNAc...) asparagine). 3 cysteine pairs are disulfide-bonded: Cys403/Cys419, Cys419/Cys457, and Cys431/Cys457. Positions 412 to 464 (NSQQTPMCQAWGNPLPQLKCLKDGTFPLPIGQSVTVTRDLEGTYLCQARSTRG) constitute an Ig-like C2-type 5 domain. The helical transmembrane segment at 481–503 (VVIIPVVAAAVILGTAGVATYLY) threads the bilayer. The Cytoplasmic portion of the chain corresponds to 504–532 (NRQRKIRKYRLQQAQNGTPMKPNTQATPP). Residues 513 to 532 (RLQQAQNGTPMKPNTQATPP) are disordered. Residues 515–532 (QQAQNGTPMKPNTQATPP) are compositionally biased toward polar residues. Thr521 and Thr530 each carry phosphothreonine.

It belongs to the immunoglobulin superfamily. ICAM family. In terms of assembly, homodimer. Interacts with MUC1 and promotes cell aggregation in epithelial cells. Interacts with ARHGEF26/SGEF. Interacts (on T cell side) with CD81, CD247 and CD9 at immunological synapses between antigen-presenting cells and T cells. Post-translationally, monoubiquitinated, which is promoted by MARCH9 and leads to endocytosis.

It is found in the membrane. Functionally, ICAM proteins are ligands for the leukocyte adhesion protein LFA-1 (integrin alpha-L/beta-2). During leukocyte trans-endothelial migration, ICAM1 engagement promotes the assembly of endothelial apical cups through ARHGEF26/SGEF and RHOG activation. This chain is Intercellular adhesion molecule 1 (ICAM1), found in Macaca mulatta (Rhesus macaque).